Here is a 227-residue protein sequence, read N- to C-terminus: E3 ubiquitin-protein ligase ZNRF1 (227 aa).

The disordered stretch occupies residues 1–42; sequence MGGKQSTAARSRGPFPGVSTDDSAVPPPGGAPHFGHYRTGGG. Gly-2 is lipidated: N-myristoyl glycine. The tract at residues 2-10 is required for endosomal and lysosomal localization and myristoylation; the sequence is GGKQSTAAR. A phosphoserine mark is found at Ser-50, Ser-52, and Ser-53. The interval 65 to 105 is disordered; it reads GGVPFSLYTPASRGTGDSERAPGGGGSTSDSTYAHGNGYQE. A Phosphotyrosine modification is found at Tyr-103. A Phosphoserine modification is found at Ser-123. The RING-type; atypical zinc-finger motif lies at 184-225; sequence CVICLEELLQGDTIARLPCLCIYHKSCIDSWFEVNRSCPEHP.

In terms of assembly, interacts with AKT1, GLUL and TUBB2A. Interacts with ZNRF2. Interacts (via its RING domain) with UBE2N. Interacts (when phosphorylated) with YWHAE. In terms of processing, N-myristoylation targets ZNRF1 to intracellular membranes. Post-translationally, phosphorylated by SRC at Tyr-103; leading to 'Lys-63'-linked ubiquitination of TLR3, lysosomal trafficking and degradation.

The protein resides in the endosome. Its subcellular location is the lysosome. The protein localises to the membrane. It is found in the cytoplasmic vesicle. It localises to the secretory vesicle. The protein resides in the synaptic vesicle membrane. The enzyme catalyses S-ubiquitinyl-[E2 ubiquitin-conjugating enzyme]-L-cysteine + [acceptor protein]-L-lysine = [E2 ubiquitin-conjugating enzyme]-L-cysteine + N(6)-ubiquitinyl-[acceptor protein]-L-lysine.. The protein operates within protein modification; protein ubiquitination. Functionally, E3 ubiquitin-protein ligase that plays a role in different processes including cell differentiation, receptor recycling or regulation of inflammation. Mediates the ubiquitination of AKT1 and GLUL, thereby playing a role in neuron cells differentiation. Plays a role in the establishment and maintenance of neuronal transmission and plasticity. Regulates Schwann cells differentiation by mediating ubiquitination of GLUL. Promotes neurodegeneration by mediating 'Lys-48'-linked polyubiquitination and subsequent degradation of AKT1 in axons: degradation of AKT1 prevents AKT1-mediated phosphorylation of GSK3B, leading to GSK3B activation and phosphorylation of DPYSL2/CRMP2 followed by destabilization of microtubule assembly in axons. Ubiquitinates the Na(+)/K(+) ATPase alpha-1 subunit/ATP1A1 and thereby influences its endocytosis and/or degradation. Controls ligand-induced EGFR signaling via mediating receptor ubiquitination and recruitment of the ESCRT machinery. Acts as a negative feedback mechanism controlling TLR3 trafficking by mediating TLR3 'Lys-63'-linked polyubiquitination to reduce type I IFN production. Modulates inflammation by promoting caveolin-1/CAV1 ubiquitination and degradation to regulate TLR4-activated immune response. The polypeptide is E3 ubiquitin-protein ligase ZNRF1 (Znrf1) (Mus musculus (Mouse)).